Here is a 335-residue protein sequence, read N- to C-terminus: Phospholipid scramblase 1 (335 aa).

Positions 1–101 (MEKHGPPEHA…NHPGGPGGTP (101 aa)) are proline-rich domain (PRD). The interval 1 to 102 (MEKHGPPEHA…HPGGPGGTPW (102 aa)) is disordered. Residues 1-305 (MEKHGPPEHA…IQFPLDLDVK (305 aa)) are Cytoplasmic-facing. Repeat copies occupy residues 23–29 (QGPYPGP), 30–36 (QGPYPGP), 37–43 (QGPYAGP), 44–50 (QGPYPGP), 51–57 (QGPYAGP), and 58–64 (QGPYPGP). Residues 23-71 (QGPYPGPQGPYPGPQGPYAGPQGPYPGPQGPYAGPQGPYPGPQPGYPVP) are 7 X 7 AA tandem repeats of Q-G-P-Y-[AP]-G-P. Positions 26–37 (YPGPQGPYPGPQ) are enriched in pro residues. Residues 59 to 72 (GPYPGPQPGYPVPP) show a composition bias toward pro residues. The SH3-binding 1 signature appears at 64–72 (PQPGYPVPP). One copy of the 7; approximate repeat lies at 65–71 (QPGYPVP). Position 91 is a phosphotyrosine; by ABL (Y91). The short motif at 101–109 (PWMQAPPPP) is the SH3-binding 2 element. T178 carries the phosphothreonine; by PKC/PRKCD modification. S-palmitoyl cysteine attachment occurs at residues C201, C202, C205, and C206. The Nuclear localization signal motif lies at 274 to 283 (GKISKQWSGF). A helical transmembrane segment spans residues 306–322 (MKAVMLGACFLIDFMFF). The Extracellular portion of the chain corresponds to 323 to 335 (ERTGNEEQRSGVW).

This sequence belongs to the phospholipid scramblase family. In terms of assembly, forms homooligomers in the presence of calcium. Interacts with ABL. Interacts with RELT, RELL1 and RELL2. Interacts with OXSR1 in the presence of RELT. Interacts with OCLN, TOP2A and TOP2B. Interacts with TRPC1, TRPC4 and TRPC5. Interacts with ILDR1. Requires Ca(2+) as cofactor. The cofactor is Mg(2+). It depends on Zn(2+) as a cofactor. In terms of processing, phosphorylated on tyrosine residues. Phosphorylated by OXSR1 in the presence of RELT. Phosphorylation at Thr-178 by PKC/PKCD increases its phospholipid scramblase activity during both cell stimulation and apoptosis. Post-translationally, palmitoylation is required for its phospholipid scramblase activity. Palmitoylation regulates its localization to the cell membrane or the nucleus; trafficking to the cell membrane is dependent upon palmitoylation whereas in the absence of palmitoylation, localizes to the nucleus.

The protein localises to the cell membrane. The protein resides in the nucleus. Its subcellular location is the cytoplasm. It is found in the perinuclear region. The enzyme catalyses a 1,2-diacyl-sn-glycero-3-phosphocholine(in) = a 1,2-diacyl-sn-glycero-3-phosphocholine(out). It carries out the reaction a 1,2-diacyl-sn-glycero-3-phosphoethanolamine(in) = a 1,2-diacyl-sn-glycero-3-phosphoethanolamine(out). The catalysed reaction is a 1,2-diacyl-sn-glycero-3-phospho-L-serine(in) = a 1,2-diacyl-sn-glycero-3-phospho-L-serine(out). Functionally, catalyzes calcium-induced ATP-independent rapid bidirectional and non-specific distribution of phospholipids (lipid scrambling or lipid flip-flop) between the inner and outer leaflet of the plasma membrane resulting in collapse of the phospholipid asymmetry which leads to phosphatidylserine externalization on the cell surface. Mediates calcium-dependent phosphatidylserine externalization and apoptosis in neurons via its association with TRPC5. Also exhibits magnesium-dependent nuclease activity against double-stranded DNA and RNA but not single-stranded DNA and can enhance DNA decatenation mediated by TOP2A. Negatively regulates FcR-mediated phagocytosis in differentiated macrophages. May contribute to cytokine-regulated cell proliferation and differentiation. The protein is Phospholipid scramblase 1 (Plscr1) of Rattus norvegicus (Rat).